The primary structure comprises 1196 residues: MSVQFIRGTAVADLEAPLIQATKQWLEEDAQHEVFYLVPNHIKFEQEIQVLQKLRQLQTTTSDSITSTRLQVFSFYRLAWYYLQHTPFYSADVLSDAGAAMIFRKILVEAEEELQIFRGEINKPGFIQQLFQLYQEMREGNIEIAELYPFLEKQTENPKGQDLQLKFQDLTLIFTRFQLQMSQYGYESAEIIQHLSEYLQTVDLSNVQFVISGYQQFTARELKLIEVLMAQAGSVKVALLLDKQYPHDLPDPRSLFYEAGQTYHQLYQLARQKQIPILSDYVEKKEVLITNPDLQGLNDYWIQSQEHLPPLSTADWRGDGLFLWRAENVKEELTHVATEIRRLVVEEGYRYKEIQVLTRDLDCYENLLEPIFAEHEIPVYVDRDMAMDRHPLVEWIESLFAIHSYNYRYRDVLRFLRTELFMPMNQLATSEESLTDWLNQRNAWRRKVDITENVVLAYGYEGYYWSQEKDWEFIRYDFEAEEQEDVATMEEESNAIRQSLQRLLPSYFQAMISAKTGLEAATVFYHFLLQSGVATQLKMWRLQAIEAGQLETARNHEQTWDALMSLLDEYVTVYGESSFDFTTFQEIFVSGLEGLHYSKVPTAIDQVQVRAMDLTRPGAAKVTFAIGMTEEIFPQKIENKTLLSDEERQTINDTLTENQYLRGTTGRKIAQEPYVAYLVFSSARERLYLTYPSVKDTAQEVKPSPYFKNIQKDLNLPVFEKNETTIFDDETTSLAHISTYRTLIGELTRLKRQRKETQEGLLPFWLNMEKALMNQSIAPLAKQVFESLTHQNIPEKIDEVLAEPLYGKDIYTSVSRMESFYRCQYQYFSRYGLRLKERDVFGLSPAATGEFFHEALDQFFKLLIMNQRNLSELTDQEVNLLAEEVLNSILGDARFSVLTTSSRMNYIRYQLSQTIKKVSWALKRQSQRSGMTTVQTEVLFGQIAAKKGISGLELPLKNQGKIHVRGKIDRIDQLVTPESTYLGVIDYKSSHRKFNMTEAYYGLAMQMLTYLDVALMDAVQLVGQEAKPAGSLYLHVHNPTLSYEGKDDIEQQMLKKYQFDGLLMKDPDLLDHLDTSLQAKQSSLLFPIEESAKEQIKPGRRQEDKFVTEPELGALLSHNRNKFIEAGNQIIGGEVQLNPAYQGKERIACRYCPFRSVCDFDVMLKENNYHRIENLSKEEIMARLLNKDEEGATEDE.

Residues cysteine 823, cysteine 1149, cysteine 1152, and cysteine 1158 each coordinate [4Fe-4S] cluster.

The protein belongs to the helicase family. AddB/RexB type 2 subfamily. Heterodimer of AddA and RexB. Mg(2+) is required as a cofactor. The cofactor is [4Fe-4S] cluster.

Functionally, the heterodimer acts as both an ATP-dependent DNA helicase and an ATP-dependent, dual-direction single-stranded exonuclease. Recognizes the chi site generating a DNA molecule suitable for the initiation of homologous recombination. This subunit has 5' -&gt; 3' nuclease activity but not helicase activity. This Enterococcus faecalis (strain ATCC 700802 / V583) protein is ATP-dependent helicase/deoxyribonuclease subunit B.